Consider the following 242-residue polypeptide: Small ribosomal subunit protein uS2 (242 aa).

The protein belongs to the universal ribosomal protein uS2 family.

The protein is Small ribosomal subunit protein uS2 of Shewanella halifaxensis (strain HAW-EB4).